The primary structure comprises 345 residues: Twinfilin (345 aa).

ADF-H domains are found at residues 4-139 and 177-312; these read QTGI…KHKR and GISC…DELH. Residues 320–345 are disordered; that stretch reads PAFAKPKGPPNRGAKRLTRPSNEDQV.

The protein belongs to the actin-binding proteins ADF family. Twinfilin subfamily. In terms of assembly, interacts with G-actin; ADP-actin form.

It is found in the cytoplasm. The protein localises to the cytoskeleton. The protein resides in the cell cortex. Functionally, actin-binding protein involved in motile and morphological processes. Inhibits actin polymerization, likely by sequestering G-actin. This is Twinfilin (twf) from Drosophila pseudoobscura pseudoobscura (Fruit fly).